Reading from the N-terminus, the 980-residue chain is Vacuolar protein sorting-associated protein 11 homolog (980 aa).

A CHCR repeat occupies 407–554 (YKETIGMLEP…GRDLLIHARD (148 aa)). An RING-type; atypical zinc finger spans residues 803–843 (CSACDTPLQLPTVHFLCKHAYHVHCFESYNMDGSDKCPACQ). Positions 886 to 898 (TKKTKKSEAKKDP) are enriched in basic and acidic residues. The interval 886–980 (TKKTKKSEAK…APAPSTNPFD (95 aa)) is disordered. 2 stretches are compositionally biased toward polar residues: residues 917 to 937 (TTIS…SRQR) and 947 to 960 (TNPF…TRLS).

The protein belongs to the VPS11 family. Probable core component of at least two putative endosomal tethering complexes, the homotypic fusion and vacuole protein sorting (HOPS) complex and the class C core vacuole/endosome tethering (CORVET) complex. Their common core is composed of the class C Vps proteins vps-11, vps-16 and vps-18, which in HOPS further associates with vps-33.1, vps-39 and vps-41 and in CORVET with vps-8 and vps-33.2.

It is found in the late endosome membrane. It localises to the lysosome membrane. In terms of biological role, plays a role in vesicle-mediated protein trafficking to lysosomal compartments including the endocytic membrane transport pathways. Believed to act as a core component of the putative HOPS and CORVET endosomal tethering complexes which are proposed to be involved in the rab-5-to-rab-7 endosome conversion probably implicating sand-1, and via binding SNAREs and SNARE complexes to mediate tethering and docking events during SNARE-mediated membrane fusion. The HOPS complex is proposed to be recruited to Rab7 on the late endosomal membrane and to regulate late endocytic, phagocytic and autophagic traffic towards lysosomes. Within the HOPS complex, contributes to the normal development of gut granules in embryonic and adult intestinal cells. The CORVET complex is proposed to function as a Rab5 effector to mediate early endosome fusion probably in specific endosome subpopulations. Required for fusion of endosomes and autophagosomes with lysosomes. Involved in cargo transport from early to late endosomes and required for the transition from early to late endosomes. Possibly has a role in clearance of apoptotic cells during programmed cell death. This chain is Vacuolar protein sorting-associated protein 11 homolog, found in Caenorhabditis elegans.